Here is a 661-residue protein sequence, read N- to C-terminus: PAN2-PAN3 deadenylation complex subunit pan3 (661 aa).

Disordered stretches follow at residues 1–29 and 53–131; these read MASVGKPSLEDARRGTGSPKMKARENAKD and DPHK…RQDA. The segment at 26–55 adopts a C3H1-type zinc-finger fold; that stretch reads NAKDTLCRNVTIYGRCRYEDKGCAFNHDPH. Positions 63 to 83 match the PABPC-interacting motif-2 (PAM-2) motif; the sequence is NASKKRFNVDSPSFTPSLLPS. The span at 77-104 shows a compositional bias: low complexity; the sequence is TPSLLPSNGSSPTSSSSSLKKSSTISPK. Polar residues predominate over residues 115-126; sequence TAASRSNTSTPG. Residues 263–524 form a pseudokinase domain region; the sequence is QTLPNTQLPA…NIDILINGIS (262 aa). Residues Arg-315, 364-371, and 424-425 contribute to the ATP site; these read DYHPLSKT and SK. Positions 525-563 form a coiled coil; that stretch reads SQLMSTFDSALHLDDQLTSDLGRELENGRLVRLLTKLNF. The knob domain stretch occupies residues 564–661; the sequence is INERPEHEHD…ALLRPSRRPH (98 aa).

The protein belongs to the protein kinase superfamily. PAN3 family. In terms of assembly, homodimer. Forms a heterotrimer with a catalytic subunit pan2 to form the poly(a)-nuclease (PAN) deadenylation complex. Interacts (via PAM-2 motif) with poly(A)-binding protein pab1 (via PABC domain), conferring substrate specificity of the enzyme complex.

The protein resides in the cytoplasm. Functionally, regulatory subunit of the poly(A)-nuclease (PAN) deadenylation complex, one of two cytoplasmic mRNA deadenylases involved in mRNA turnover. PAN specifically shortens poly(A) tails of RNA and the activity is stimulated by poly(A)-binding protein pab1. PAN deadenylation is followed by rapid degradation of the shortened mRNA tails by the CCR4-NOT complex. Deadenylated mRNAs are then degraded by two alternative mechanisms, namely exosome-mediated 3'-5' exonucleolytic degradation, or deadenylation-dependent mRNA decaping and subsequent 5'-3' exonucleolytic degradation by XRN1. May also be involved in post-transcriptional maturation of mRNA poly(A) tails. pan3 acts as a positive regulator for PAN activity, recruiting the catalytic subunit pan2 to mRNA via its interaction with RNA and with pab1. This chain is PAN2-PAN3 deadenylation complex subunit pan3, found in Emericella nidulans (strain FGSC A4 / ATCC 38163 / CBS 112.46 / NRRL 194 / M139) (Aspergillus nidulans).